A 417-amino-acid polypeptide reads, in one-letter code: Gamma-glutamyl phosphate reductase (417 aa).

This sequence belongs to the gamma-glutamyl phosphate reductase family.

The protein localises to the cytoplasm. It catalyses the reaction L-glutamate 5-semialdehyde + phosphate + NADP(+) = L-glutamyl 5-phosphate + NADPH + H(+). The protein operates within amino-acid biosynthesis; L-proline biosynthesis; L-glutamate 5-semialdehyde from L-glutamate: step 2/2. Its function is as follows. Catalyzes the NADPH-dependent reduction of L-glutamate 5-phosphate into L-glutamate 5-semialdehyde and phosphate. The product spontaneously undergoes cyclization to form 1-pyrroline-5-carboxylate. In Shigella flexneri serotype 5b (strain 8401), this protein is Gamma-glutamyl phosphate reductase.